A 78-amino-acid polypeptide reads, in one-letter code: DNA-directed RNA polymerase subunit omega (78 aa).

It belongs to the RNA polymerase subunit omega family. As to quaternary structure, in cyanobacteria the RNAP catalytic core is composed of 2 alpha, 1 beta, 1 beta', 1 gamma and 1 omega subunit. When a sigma factor is associated with the core the holoenzyme is formed, which can initiate transcription.

It catalyses the reaction RNA(n) + a ribonucleoside 5'-triphosphate = RNA(n+1) + diphosphate. Functionally, promotes RNA polymerase assembly. Latches the N- and C-terminal regions of the beta' subunit thereby facilitating its interaction with the beta and alpha subunits. The chain is DNA-directed RNA polymerase subunit omega from Prochlorococcus marinus (strain MIT 9312).